The sequence spans 514 residues: MLVSKKPMVLVILDGYGYREEQQDNAIFSAKTPVMDALWANRPHTLIDASGLEVGLPDRQMGNSEVGHVNLGAGRIVYQDLTRLDVEIKDRAFFANPVLTGAVDKAKNAGKAVHIMGLLSAGGVHSHEDHIMAMVELAAERGAEKIYLHAFLDGRDTPPRSAESSLKKFEEKFAALGKGRVASIIGRYYAMDRDNRWDRVEKAYDLLTLAQGEFQADTAVAGLQAAYARDENDEFVKATVIRAEGQPDAAMEDGDALIFMNFRADRAREITRAFVNADFDGFARKKVVNVDFVMLTEYAADIKTAVAYPPASLVNTFGEWMAKNDKTQLRISETEKYAHVTFFFNGGVEESFKGEDRILINSPKVATYDLQPEMSSAELTEKLVAAIKSGKYDTIICNYPNGDMVGHTGVMEAAVKAVEALDHCVEEVAKAVESVGGQLLITADHGNAEQMRDPATGQAHTAHTNLPVPLIYVGDKNVKAVEGGKLSDIAPTMLSLMGMEIPQEMTGKPLFIVE.

Positions 14 and 64 each coordinate Mn(2+). The active-site Phosphoserine intermediate is Ser-64. Residues His-125, 155-156 (RD), Arg-187, Arg-193, 263-266 (RADR), and Lys-336 contribute to the substrate site. Residues Asp-403, His-407, Asp-444, His-445, and His-463 each contribute to the Mn(2+) site.

Belongs to the BPG-independent phosphoglycerate mutase family. Monomer. Mn(2+) is required as a cofactor.

The enzyme catalyses (2R)-2-phosphoglycerate = (2R)-3-phosphoglycerate. The protein operates within carbohydrate degradation; glycolysis; pyruvate from D-glyceraldehyde 3-phosphate: step 3/5. Insensitive to vanadate. Its function is as follows. Catalyzes the interconversion of 2-phosphoglycerate (2-PGA) and 3-phosphoglycerate (3-PGA). The chain is 2,3-bisphosphoglycerate-independent phosphoglycerate mutase from Escherichia coli (strain K12).